Reading from the N-terminus, the 184-residue chain is Elongation factor P (184 aa).

It belongs to the elongation factor P family.

It is found in the cytoplasm. It functions in the pathway protein biosynthesis; polypeptide chain elongation. Its function is as follows. Involved in peptide bond synthesis. Stimulates efficient translation and peptide-bond synthesis on native or reconstituted 70S ribosomes in vitro. Probably functions indirectly by altering the affinity of the ribosome for aminoacyl-tRNA, thus increasing their reactivity as acceptors for peptidyl transferase. The protein is Elongation factor P of Paracidovorax citrulli (strain AAC00-1) (Acidovorax citrulli).